The sequence spans 196 residues: Leucyl/phenylalanyl-tRNA--protein transferase (196 aa).

Belongs to the L/F-transferase family.

The protein resides in the cytoplasm. It catalyses the reaction N-terminal L-lysyl-[protein] + L-leucyl-tRNA(Leu) = N-terminal L-leucyl-L-lysyl-[protein] + tRNA(Leu) + H(+). It carries out the reaction N-terminal L-arginyl-[protein] + L-leucyl-tRNA(Leu) = N-terminal L-leucyl-L-arginyl-[protein] + tRNA(Leu) + H(+). The enzyme catalyses L-phenylalanyl-tRNA(Phe) + an N-terminal L-alpha-aminoacyl-[protein] = an N-terminal L-phenylalanyl-L-alpha-aminoacyl-[protein] + tRNA(Phe). Functionally, functions in the N-end rule pathway of protein degradation where it conjugates Leu, Phe and, less efficiently, Met from aminoacyl-tRNAs to the N-termini of proteins containing an N-terminal arginine or lysine. The protein is Leucyl/phenylalanyl-tRNA--protein transferase of Thermosynechococcus vestitus (strain NIES-2133 / IAM M-273 / BP-1).